Reading from the N-terminus, the 599-residue chain is Sulfite reductase [NADPH] flavoprotein alpha-component (599 aa).

A Flavodoxin-like domain is found at 64 to 202 (VTLISASQTG…AASEWRARVV (139 aa)). Residues 70–75 (SQTGNA), 117–120 (STQG), and 153–162 (LGDTSYEFFC) contribute to the FMN site. Residues 234 to 448 (DAPLAATLSV…IEHNDNFRLP (215 aa)) form the FAD-binding FR-type domain. FAD-binding positions include threonine 322, alanine 356, 386–389 (RLYS), 404–406 (TVG), tyrosine 410, and 419–422 (GGAS). NADP(+)-binding positions include 519–520 (SR), 525–529 (KIYVQ), and aspartate 561. Tyrosine 599 provides a ligand contact to FAD.

Belongs to the NADPH-dependent sulphite reductase flavoprotein subunit CysJ family. The protein in the N-terminal section; belongs to the flavodoxin family. This sequence in the C-terminal section; belongs to the flavoprotein pyridine nucleotide cytochrome reductase family. As to quaternary structure, alpha(8)-beta(8). The alpha component is a flavoprotein, the beta component is a hemoprotein. The cofactor is FAD. Requires FMN as cofactor.

The enzyme catalyses hydrogen sulfide + 3 NADP(+) + 3 H2O = sulfite + 3 NADPH + 4 H(+). It participates in sulfur metabolism; hydrogen sulfide biosynthesis; hydrogen sulfide from sulfite (NADPH route): step 1/1. Component of the sulfite reductase complex that catalyzes the 6-electron reduction of sulfite to sulfide. This is one of several activities required for the biosynthesis of L-cysteine from sulfate. The flavoprotein component catalyzes the electron flow from NADPH -&gt; FAD -&gt; FMN to the hemoprotein component. The polypeptide is Sulfite reductase [NADPH] flavoprotein alpha-component (Salmonella paratyphi B (strain ATCC BAA-1250 / SPB7)).